Here is a 505-residue protein sequence, read N- to C-terminus: Pleckstrin homology domain-containing family D member 1 (505 aa).

In terms of domain architecture, PH spans 28 to 136; that stretch reads KVQLYGVLWK…WLEMLQESGK (109 aa). A coiled-coil region spans residues 146 to 391; sequence EAMIKSLEAQ…KVRNKEKEER (246 aa). The interval 264 to 284 is disordered; sequence DKNQPQPLTNQSEQPPATDGL. A compositionally biased stretch (polar residues) spans 267–278; the sequence is QPQPLTNQSEQP. An Omega-N-methylarginine modification is found at Arg502.

Belongs to the PLEKHD1 family.

This Rattus norvegicus (Rat) protein is Pleckstrin homology domain-containing family D member 1 (Plekhd1).